Here is a 366-residue protein sequence, read N- to C-terminus: Capsular polysaccharide phosphotransferase LcbA (366 aa).

This sequence belongs to the stealth family.

The polypeptide is Capsular polysaccharide phosphotransferase LcbA (lcbA) (Neisseria meningitidis).